The following is a 400-amino-acid chain: Delta(12) fatty acid desaturase (400 aa).

A helical membrane pass occupies residues 91–111 (LAWPAYWIMQGIVCTGIWVLA). Positions 112–116 (HECGH) match the Histidine box-1 motif. The short motif at 148–152 (HSKHH) is the Histidine box-2 element. The next 3 helical transmembrane spans lie at 199–219 (IVTL…YLIM), 245–265 (FFDI…LIYA), and 277–297 (YYII…FLQH). Positions 339 to 343 (HVAHH) match the Histidine box-3 motif.

Belongs to the fatty acid desaturase type 1 family.

The protein resides in the membrane. It catalyses the reaction (9Z)-octadecenoyl-CoA + 2 Fe(II)-[cytochrome b5] + O2 + 2 H(+) = (9Z,12Z)-octadecadienoyl-CoA + 2 Fe(III)-[cytochrome b5] + 2 H2O. The enzyme catalyses (9Z)-hexadecenoyl-CoA + 2 Fe(II)-[cytochrome b5] + O2 + 2 H(+) = (9Z,12Z)-hexadecadienoyl-CoA + 2 Fe(III)-[cytochrome b5] + 2 H2O. The protein operates within lipid metabolism; polyunsaturated fatty acid biosynthesis. Its function is as follows. Catalyzes the desaturation of oleic acid (Delta(9)-18:1) to linoleic acid (Delta(9), Delta(12)-18:2). This is Delta(12) fatty acid desaturase from Mortierella isabellina (Filamentous fungus).